Here is a 390-residue protein sequence, read N- to C-terminus: tRNA (guanine(9)-N1)-methyltransferase (390 aa).

The disordered stretch occupies residues 1 to 72 (MDIDEESYLN…RTAQLAEGYA (72 aa)). Positions 43-59 (ARLEEIKPLKRAAERER) are enriched in basic and acidic residues. An SAM-dependent MTase TRM10-type domain is found at 92 to 340 (KERKEAQRRI…AVIPIRKYAP (249 aa)). S-adenosyl-L-methionine-binding positions include 246–247 (LS), Gly-266, 270–274 (DRNRH), Cys-278, Leu-292, and 305–307 (KVL). Asp-270 (proton acceptor) is an active-site residue. The tract at residues 343–390 (KTKRAKTETKRNEKEEEEVECTSAEGEEDIGVIEESAEVDPEDVFSNQ) is disordered. The span at 347–356 (AKTETKRNEK) shows a compositional bias: basic and acidic residues. Residues 357 to 390 (EEEEVECTSAEGEEDIGVIEESAEVDPEDVFSNQ) show a composition bias toward acidic residues.

Belongs to the class IV-like SAM-binding methyltransferase superfamily. TRM10 family. As to quaternary structure, monomer.

It is found in the cytoplasm. Its subcellular location is the nucleus. The catalysed reaction is guanosine(9) in tRNA + S-adenosyl-L-methionine = N(1)-methylguanosine(9) in tRNA + S-adenosyl-L-homocysteine + H(+). S-adenosyl-L-methionine-dependent guanine N(1)-methyltransferase that catalyzes the formation of N(1)-methylguanine at position 9 (m1G9) in cytoplasmic tRNA. This is tRNA (guanine(9)-N1)-methyltransferase from Cryptococcus neoformans var. neoformans serotype D (strain JEC21 / ATCC MYA-565) (Filobasidiella neoformans).